We begin with the raw amino-acid sequence, 42 residues long: Protein Tat (42 aa).

The interval 1–24 (MEPVDPNLEPWNHPGSQPKTACNQ) is interaction with human CREBBP. The tract at residues 22-37 (CNQCYCKKCSYHCLVC) is cysteine-rich. The residue at position 28 (Lys-28) is an N6-acetyllysine; by host PCAF.

The protein belongs to the lentiviruses Tat family. In terms of assembly, interacts with host CCNT1. Associates with the P-TEFb complex composed at least of Tat, P-TEFb (CDK9 and CCNT1), TAR RNA, RNA Pol II. Recruits the HATs CREBBP, TAF1/TFIID, EP300, PCAF and GCN5L2. Interacts with host KAT5/Tip60; this interaction targets the latter to degradation. Interacts with the host deacetylase SIRT1. Interacts with host capping enzyme RNGTT; this interaction stimulates RNGTT. Binds to host KDR, and to the host integrins ITGAV/ITGB3 and ITGA5/ITGB1. Interacts with host KPNB1/importin beta-1 without previous binding to KPNA1/importin alpha-1. Interacts with EIF2AK2. Interacts with host nucleosome assembly protein NAP1L1; this interaction may be required for the transport of Tat within the nucleus, since the two proteins interact at the nuclear rim. Interacts with host C1QBP/SF2P32; this interaction involves lysine-acetylated Tat. Interacts with the host chemokine receptors CCR2, CCR3 and CXCR4. Interacts with host DPP4/CD26; this interaction may trigger an anti-proliferative effect. Interacts with host LDLR. Interacts with the host extracellular matrix metalloproteinase MMP1. Interacts with host PRMT6; this interaction mediates Tat's methylation. Interacts with, and is ubiquitinated by MDM2/Hdm2. Interacts with host PSMC3 and HTATIP2. Interacts with STAB1; this interaction may overcome SATB1-mediated repression of IL2 and IL2RA (interleukin) in T cells by binding to the same domain than HDAC1. Interacts (when acetylated) with human CDK13, thereby increasing HIV-1 mRNA splicing and promoting the production of the doubly spliced HIV-1 protein Nef. Interacts with host TBP; this interaction modulates the activity of transcriptional pre-initiation complex. Interacts with host RELA. Interacts with host PLSCR1; this interaction negatively regulates Tat transactivation activity by altering its subcellular distribution. Phosphorylated by EIF2AK2 on serine and threonine residues adjacent to the basic region important for TAR RNA binding and function. Phosphorylation of Tat by EIF2AK2 is dependent on the prior activation of EIF2AK2 by dsRNA. In terms of processing, asymmetrical arginine methylation by host PRMT6 seems to diminish the transactivation capacity of Tat and affects the interaction with host CCNT1. Post-translationally, polyubiquitination by host MDM2 does not target Tat to degradation, but activates its transactivation function and fosters interaction with CCNT1 and TAR RNA.

The protein localises to the host nucleus. It localises to the host nucleolus. Its subcellular location is the host cytoplasm. The protein resides in the secreted. Transcriptional activator that increases RNA Pol II processivity, thereby increasing the level of full-length viral transcripts. Recognizes a hairpin structure at the 5'-LTR of the nascent viral mRNAs referred to as the transactivation responsive RNA element (TAR) and recruits the cyclin T1-CDK9 complex (P-TEFb complex) that will in turn hyperphosphorylate the RNA polymerase II to allow efficient elongation. The CDK9 component of P-TEFb and other Tat-activated kinases hyperphosphorylate the C-terminus of RNA Pol II that becomes stabilized and much more processive. Other factors such as HTATSF1/Tat-SF1, SUPT5H/SPT5, and HTATIP2 are also important for Tat's function. Besides its effect on RNA Pol II processivity, Tat induces chromatin remodeling of proviral genes by recruiting the histone acetyltransferases (HATs) CREBBP, EP300 and PCAF to the chromatin. This also contributes to the increase in proviral transcription rate, especially when the provirus integrates in transcriptionally silent region of the host genome. To ensure maximal activation of the LTR, Tat mediates nuclear translocation of NF-kappa-B by interacting with host RELA. Through its interaction with host TBP, Tat may also modulate transcription initiation. Tat can reactivate a latently infected cell by penetrating in it and transactivating its LTR promoter. In the cytoplasm, Tat is thought to act as a translational activator of HIV-1 mRNAs. In terms of biological role, extracellular circulating Tat can be endocytosed by surrounding uninfected cells via the binding to several surface receptors such as CD26, CXCR4, heparan sulfate proteoglycans (HSPG) or LDLR. Neurons are rarely infected, but they internalize Tat via their LDLR. Through its interaction with nuclear HATs, Tat is potentially able to control the acetylation-dependent cellular gene expression. Modulates the expression of many cellular genes involved in cell survival, proliferation or in coding for cytokines or cytokine receptors. Tat plays a role in T-cell and neurons apoptosis. Tat induced neurotoxicity and apoptosis probably contribute to neuroAIDS. Circulating Tat also acts as a chemokine-like and/or growth factor-like molecule that binds to specific receptors on the surface of the cells, affecting many cellular pathways. In the vascular system, Tat binds to ITGAV/ITGB3 and ITGA5/ITGB1 integrins dimers at the surface of endothelial cells and competes with bFGF for heparin-binding sites, leading to an excess of soluble bFGF. This Human immunodeficiency virus type 1 group M subtype C (isolate ETH2220) (HIV-1) protein is Protein Tat.